We begin with the raw amino-acid sequence, 91 residues long: Small ribosomal subunit protein uS15 (91 aa).

It belongs to the universal ribosomal protein uS15 family. In terms of assembly, part of the 30S ribosomal subunit. Forms a bridge to the 50S subunit in the 70S ribosome, contacting the 23S rRNA.

Its function is as follows. One of the primary rRNA binding proteins, it binds directly to 16S rRNA where it helps nucleate assembly of the platform of the 30S subunit by binding and bridging several RNA helices of the 16S rRNA. Functionally, forms an intersubunit bridge (bridge B4) with the 23S rRNA of the 50S subunit in the ribosome. The chain is Small ribosomal subunit protein uS15 from Rickettsia typhi (strain ATCC VR-144 / Wilmington).